Here is a 141-residue protein sequence, read N- to C-terminus: Nucleoside diphosphate kinase (141 aa).

Residues K11, F59, R87, T93, R104, and N114 each contribute to the ATP site. H117 serves as the catalytic Pros-phosphohistidine intermediate.

It belongs to the NDK family. As to quaternary structure, homotetramer. It depends on Mg(2+) as a cofactor.

The protein resides in the cytoplasm. The catalysed reaction is a 2'-deoxyribonucleoside 5'-diphosphate + ATP = a 2'-deoxyribonucleoside 5'-triphosphate + ADP. It carries out the reaction a ribonucleoside 5'-diphosphate + ATP = a ribonucleoside 5'-triphosphate + ADP. Its function is as follows. Major role in the synthesis of nucleoside triphosphates other than ATP. The ATP gamma phosphate is transferred to the NDP beta phosphate via a ping-pong mechanism, using a phosphorylated active-site intermediate. This Haemophilus influenzae (strain ATCC 51907 / DSM 11121 / KW20 / Rd) protein is Nucleoside diphosphate kinase.